The sequence spans 581 residues: NADH-quinone oxidoreductase subunit C/D (581 aa).

An NADH dehydrogenase I subunit C region spans residues 1–172 (MSAVELVNEL…PPFVMTAARF (172 aa)). The interval 196-581 (ELMILNYGPH…IDYVMSDVDR (386 aa)) is NADH dehydrogenase I subunit D.

It in the N-terminal section; belongs to the complex I 30 kDa subunit family. This sequence in the C-terminal section; belongs to the complex I 49 kDa subunit family. In terms of assembly, NDH-1 is composed of 13 different subunits. Subunits NuoB, CD, E, F, and G constitute the peripheral sector of the complex.

It localises to the cell inner membrane. It catalyses the reaction a quinone + NADH + 5 H(+)(in) = a quinol + NAD(+) + 4 H(+)(out). NDH-1 shuttles electrons from NADH, via FMN and iron-sulfur (Fe-S) centers, to quinones in the respiratory chain. The immediate electron acceptor for the enzyme in this species is believed to be ubiquinone. Couples the redox reaction to proton translocation (for every two electrons transferred, four hydrogen ions are translocated across the cytoplasmic membrane), and thus conserves the redox energy in a proton gradient. This chain is NADH-quinone oxidoreductase subunit C/D, found in Rhodopseudomonas palustris (strain BisB18).